Here is a 152-residue protein sequence, read N- to C-terminus: Large ribosomal subunit protein uL15 (152 aa).

Residues 1-13 show a composition bias toward polar residues; sequence MLTLGNLSPQEGS. A disordered region spans residues 1–62; that stretch reads MLTLGNLSPQ…GGQMPLQRRL (62 aa). A compositionally biased stretch (basic residues) spans 31-40; it reads TAGRGHKGFK.

Belongs to the universal ribosomal protein uL15 family. As to quaternary structure, part of the 50S ribosomal subunit.

Binds to the 23S rRNA. This chain is Large ribosomal subunit protein uL15, found in Desulfotalea psychrophila (strain LSv54 / DSM 12343).